We begin with the raw amino-acid sequence, 622 residues long: Wall-associated receptor kinase-like 21 (622 aa).

The first 21 residues, 1-21 (MAETPQPYLIFVFFVFTLTVA), serve as a signal peptide directing secretion. The Extracellular portion of the chain corresponds to 22-247 (TQTTGSVKCK…LVYKRKGLHK (226 aa)). N-linked (GlcNAc...) asparagine glycans are attached at residues Asn-50, Asn-114, Asn-131, Asn-160, and Asn-195. The helical transmembrane segment at 248–268 (LVVLGTAGILVGVLVIVVLIA) threads the bilayer. Over 269 to 622 (TYFFRNKQSA…MKRQQSFPRE (354 aa)) the chain is Cytoplasmic. A Protein kinase domain is found at 314–594 (FSDKNMLGTG…EITEDLHRIK (281 aa)). ATP is bound by residues 320–328 (LGTGAYGTV) and Lys-342. The Proton acceptor role is filled by Asp-439.

The protein belongs to the protein kinase superfamily. Ser/Thr protein kinase family.

It localises to the membrane. The catalysed reaction is L-seryl-[protein] + ATP = O-phospho-L-seryl-[protein] + ADP + H(+). It carries out the reaction L-threonyl-[protein] + ATP = O-phospho-L-threonyl-[protein] + ADP + H(+). Its function is as follows. Serine/threonine-protein kinase that may function as a signaling receptor of extracellular matrix component. The sequence is that of Wall-associated receptor kinase-like 21 (WAKL21) from Arabidopsis thaliana (Mouse-ear cress).